A 23-amino-acid polypeptide reads, in one-letter code: Caerulein precursor fragment R6 (23 aa).

Expressed by the skin glands.

The protein resides in the secreted. Functionally, antimicrobial peptide. This is Caerulein precursor fragment R6 from Xenopus ruwenzoriensis (Uganda clawed frog).